Consider the following 376-residue polypeptide: Alcohol dehydrogenase class-3 (376 aa).

Zn(2+) is bound by residues Cys47, His69, Cys99, Cys102, Cys105, Cys113, and Cys176.

The protein belongs to the zinc-containing alcohol dehydrogenase family. Class-III subfamily. Homodimer. Zn(2+) is required as a cofactor. Expressed in the skeletal muscle, heart, gill filaments and liver, with highest levels in the kidney.

The protein localises to the cytoplasm. It catalyses the reaction a primary alcohol + NAD(+) = an aldehyde + NADH + H(+). The enzyme catalyses a secondary alcohol + NAD(+) = a ketone + NADH + H(+). It carries out the reaction S-(hydroxymethyl)glutathione + NADP(+) = S-formylglutathione + NADPH + H(+). The catalysed reaction is S-(hydroxymethyl)glutathione + NAD(+) = S-formylglutathione + NADH + H(+). It catalyses the reaction S-nitrosoglutathione + NADH + H(+) = S-(hydroxysulfenamide)glutathione + NAD(+). Class-III ADH is remarkably ineffective in oxidizing ethanol, but it readily catalyzes the oxidation of long-chain primary alcohols and the oxidation of S-(hydroxymethyl) glutathione. Also acts as a S-nitroso-glutathione reductase by catalyzing the NADH-dependent reduction of S-nitrosoglutathione, thereby regulating protein S-nitrosylation. The sequence is that of Alcohol dehydrogenase class-3 from Sparus aurata (Gilthead sea bream).